The following is a 276-amino-acid chain: Diaminopimelate epimerase (276 aa).

The substrate site is built by asparagine 13, glutamine 46, and asparagine 66. The active-site Proton donor is the cysteine 75. Substrate-binding positions include 76 to 77 (GN), asparagine 159, asparagine 192, and 210 to 211 (ER). Catalysis depends on cysteine 219, which acts as the Proton acceptor. 220–221 (GT) is a substrate binding site.

It belongs to the diaminopimelate epimerase family. Homodimer.

It is found in the cytoplasm. The catalysed reaction is (2S,6S)-2,6-diaminopimelate = meso-2,6-diaminopimelate. Its pathway is amino-acid biosynthesis; L-lysine biosynthesis via DAP pathway; DL-2,6-diaminopimelate from LL-2,6-diaminopimelate: step 1/1. Catalyzes the stereoinversion of LL-2,6-diaminopimelate (L,L-DAP) to meso-diaminopimelate (meso-DAP), a precursor of L-lysine and an essential component of the bacterial peptidoglycan. The protein is Diaminopimelate epimerase of Pseudomonas entomophila (strain L48).